The sequence spans 303 residues: Glutathione transport system permease protein GsiD (303 aa).

Helical transmembrane passes span 40–60, 105–125, 144–164, 165–185, 222–242, and 266–286; these read AMTAALFVILLIVVAIFARWI, LAAGVFAVFIGAAIGTLLGLL, LFAFPGILLAIAVVAVLGSGI, ANVIIAVAIFSIPAFARLVRG, IVVFFTMRIGTSIISAASLSF, and VIAPHVAVFPALAIFLTVLAF. The 190-residue stretch at 101 to 290 folds into the ABC transmembrane type-1 domain; the sequence is AQISLAAGVF…LTVLAFNLLG (190 aa).

The protein belongs to the binding-protein-dependent transport system permease family. As to quaternary structure, the complex is composed of two ATP-binding proteins (GsiA), two transmembrane proteins (GsiC and GsiD) and a solute-binding protein (GsiB).

It localises to the cell inner membrane. In terms of biological role, part of the ABC transporter complex GsiABCD involved in glutathione import. Probably responsible for the translocation of the substrate across the membrane. This Escherichia coli O6:K15:H31 (strain 536 / UPEC) protein is Glutathione transport system permease protein GsiD.